A 40-amino-acid polypeptide reads, in one-letter code: Photosystem II reaction center protein J (40 aa).

The chain crosses the membrane as a helical span at residues 8-28; it reads IPLWLIGTVVGTPVISLVGIF.

This sequence belongs to the PsbJ family. In terms of assembly, PSII is composed of 1 copy each of membrane proteins PsbA, PsbB, PsbC, PsbD, PsbE, PsbF, PsbH, PsbI, PsbJ, PsbK, PsbL, PsbM, PsbT, PsbX, PsbY, PsbZ, Psb30/Ycf12, at least 3 peripheral proteins of the oxygen-evolving complex and a large number of cofactors. It forms dimeric complexes.

The protein resides in the plastid. Its subcellular location is the chloroplast thylakoid membrane. One of the components of the core complex of photosystem II (PSII). PSII is a light-driven water:plastoquinone oxidoreductase that uses light energy to abstract electrons from H(2)O, generating O(2) and a proton gradient subsequently used for ATP formation. It consists of a core antenna complex that captures photons, and an electron transfer chain that converts photonic excitation into a charge separation. This chain is Photosystem II reaction center protein J, found in Huperzia lucidula (Shining clubmoss).